Consider the following 419-residue polypeptide: Tyrosine--tRNA ligase (419 aa).

Residue Y34 coordinates L-tyrosine. The 'HIGH' region signature appears at 39-48; the sequence is PTADSLHIGH. Y169, Q173, and D176 together coordinate L-tyrosine. The 'KMSKS' region signature appears at 230 to 234; that stretch reads KFGKT. K233 is an ATP binding site. An S4 RNA-binding domain is found at 352-419; the sequence is VPLVELLVSA…KKKYYLIRYA (68 aa).

It belongs to the class-I aminoacyl-tRNA synthetase family. TyrS type 1 subfamily. In terms of assembly, homodimer.

The protein resides in the cytoplasm. The catalysed reaction is tRNA(Tyr) + L-tyrosine + ATP = L-tyrosyl-tRNA(Tyr) + AMP + diphosphate + H(+). Catalyzes the attachment of tyrosine to tRNA(Tyr) in a two-step reaction: tyrosine is first activated by ATP to form Tyr-AMP and then transferred to the acceptor end of tRNA(Tyr). In Geobacillus stearothermophilus (Bacillus stearothermophilus), this protein is Tyrosine--tRNA ligase (tyrS).